The following is a 114-amino-acid chain: Class I hydrophobin 1 (114 aa).

The signal sequence occupies residues 1 to 20; it reads MQFTKMSAFATLALATLAAA. 4 cysteine pairs are disulfide-bonded: C33–C93, C40–C87, C41–C74, and C94–C107.

Belongs to the fungal hydrophobin family. Self-assembles to form functional amyloid fibrils called rodlets. Self-assembly into fibrillar rodlets occurs spontaneously at hydrophobic:hydrophilic interfaces and the rodlets further associate laterally to form amphipathic monolayers.

Its subcellular location is the secreted. The protein resides in the cell wall. Functionally, aerial growth, conidiation, and dispersal of filamentous fungi in the environment rely upon a capability of their secreting small amphipathic proteins called hydrophobins (HPBs) with low sequence identity. Class I can self-assemble into an outermost layer of rodlet bundles on aerial cell surfaces, conferring cellular hydrophobicity that supports fungal growth, development and dispersal; whereas Class II form highly ordered films at water-air interfaces through intermolecular interactions but contribute nothing to the rodlet structure. Pnh1 is a class I hydrophobin that might be involved in the attachment of the hydrophilic wall of hyphae to the hydrophobic surface of wood under inorganic phosphate (Pi)-deficient conditions and enable the mycelium to degrade efficiently the components of wood and to acquire nutrients containing Pi. In Pholiota nameko, this protein is Class I hydrophobin 1.